The primary structure comprises 109 residues: Nucleoid-associated protein LBUL_1514 (109 aa).

This sequence belongs to the YbaB/EbfC family. In terms of assembly, homodimer.

Its subcellular location is the cytoplasm. It localises to the nucleoid. Binds to DNA and alters its conformation. May be involved in regulation of gene expression, nucleoid organization and DNA protection. The sequence is that of Nucleoid-associated protein LBUL_1514 from Lactobacillus delbrueckii subsp. bulgaricus (strain ATCC BAA-365 / Lb-18).